The primary structure comprises 113 residues: Con-Ins G3 (113 aa).

The N-terminal stretch at 1 to 21 (MTTSFYFLLVALGLLLYVCQS) is a signal peptide. A propeptide spanning residues 22 to 29 (SFGNQHTR) is cleaved from the precursor. Residue Pro34 is modified to 4-hydroxyproline; partial. Intrachain disulfides connect Cys38–Cys99, Cys50–Cys112, and Cys98–Cys103. The residue at position 41 (Glu41) is a 4-carboxyglutamate. His51 bears the Histidine amide mark. A propeptide spans 52-92 (GKRNDAGKKRGRASPLWQRQGFLSMLKAKRNEAFFLQRDGR) (c peptide). Glu96 is modified (4-carboxyglutamate). Pro102 carries the 4-hydroxyproline; partial modification.

It belongs to the insulin family. In terms of assembly, heterodimer of A and B chains; disulfide-linked. Post-translationally, it is noteworthy that in this dimer, in contrast to Con-Ins G1, the chain B is amidated and not the chain A. As to expression, expressed by the venom gland.

The protein resides in the secreted. Its function is as follows. This venom insulin, from a fish-hunting cone snail, facilitates prey capture by rapidly inducing hypoglycemic shock. It is one of the smallest known insulin found in nature and lacks the C-terminal segment of the B chain that, in human insulin, mediates engagement of the insulin receptor (INSR) and assembly of the hormone's hexameric storage form. Despite lacking this segment, it both binds and activates human insulin receptor (long isoform (HIR-B)) with a high potency (EC(50)=242 nM). In vivo, intraperitoneal injection of this peptide into zebrafish lowers blood glucose with a lower potency than human insulin. In addition, when applied to water, this peptide reduces overall locomotor activity of zebrafish larvae, observed as a significant decrease in the percentage of time spent swimming and movement frequency. When tested on a mouse model of diabetes, this insulin also lowers blood glucose with a 10-fold lower potency than human insulin. In Conus geographus (Geography cone), this protein is Con-Ins G3.